The chain runs to 199 residues: UPF0056 membrane protein bbp_399 (199 aa).

The next 6 helical transmembrane spans lie at 7 to 29 (VTILLILIMDPLGNLPIFMSILK), 39 to 58 (ILIREMMIALLIMLLFLFAG), 71 to 93 (TVSVSGGIILFLIAIKMIFPTYE), 108 to 130 (FLVPLAIPLVAGPSLLATLMLLS), 137 to 156 (ILYLIGSLLIAWMITVVILL), and 176 to 198 (LMGLILIMLSTQMFLDGIKSWFY).

The protein belongs to the UPF0056 (MarC) family.

Its subcellular location is the cell membrane. This is UPF0056 membrane protein bbp_399 from Buchnera aphidicola subsp. Baizongia pistaciae (strain Bp).